Reading from the N-terminus, the 223-residue chain is Serine/threonine/tyrosine-interacting protein (223 aa).

Residues 28–176 (EMQEILPGLF…LQEYEAIYLA (149 aa)) enclose the Tyrosine-protein phosphatase domain. Residues 76-78 (FQQ) carry the Interaction with FBXW7 motif. A phosphoserine mark is found at Ser184, Ser193, and Ser201. Residues 197 to 223 (GTTGSLKRTHEEEDDFGTMQVATAQNG) are disordered.

The protein belongs to the protein-tyrosine phosphatase family. Non-receptor class subfamily. In terms of assembly, interacts with MAPK1; independently of MAPK1 phosphorylation status. Interacts with CARHSP1/Crhsp-24. Interacts (via FQQ motif) with FBXW7 (via F-box domain); the interaction is direct and prevents FBXW7 interaction with SKP1, a component of the SCF(FBXW7) complex.

It localises to the nucleus. Its subcellular location is the cytoplasm. The protein localises to the cytosol. In terms of biological role, catalytically inactive phosphatase. Acts as a nuclear anchor for MAPK1/MAPK3 (ERK1/ERK2). Modulates cell-fate decisions and cell migration by spatiotemporal regulation of MAPK1/MAPK3 (ERK1/ERK2). By binding to the F-box of FBXW7, prevents the assembly of FBXW7 into the SCF E3 ubiquitin-protein ligase complex, and thereby inhibits degradation of its substrates. Plays a role in spermatogenesis. The sequence is that of Serine/threonine/tyrosine-interacting protein (STYX) from Pongo abelii (Sumatran orangutan).